A 248-amino-acid chain; its full sequence is MSFVVIIPARYASTRLPGKPLVDINGKPMIVHVLERARESGAERIIVATDHEDVARAVEAAGGEVCMTRADHQSGTERLAEVVEKCAFSDDTVIVNVQGDEPMIPATIIRQVADNLAQRQVGMATLAVPIHNAEEAFNPNAVKVVLDAEGYALYFSRATIPWDRDRFAEGLETVGDNFLRHLGIYGYRAGFIRRYVNWQASPLEHIEMLEQLRVLWYGEKIHVAVAQEVPGTGVDTPEDLERVRAEMR.

It belongs to the KdsB family.

It is found in the cytoplasm. The enzyme catalyses 3-deoxy-alpha-D-manno-oct-2-ulosonate + CTP = CMP-3-deoxy-beta-D-manno-octulosonate + diphosphate. It functions in the pathway nucleotide-sugar biosynthesis; CMP-3-deoxy-D-manno-octulosonate biosynthesis; CMP-3-deoxy-D-manno-octulosonate from 3-deoxy-D-manno-octulosonate and CTP: step 1/1. The protein operates within bacterial outer membrane biogenesis; lipopolysaccharide biosynthesis. In terms of biological role, activates KDO (a required 8-carbon sugar) for incorporation into bacterial lipopolysaccharide in Gram-negative bacteria. The chain is 3-deoxy-manno-octulosonate cytidylyltransferase from Shigella boydii serotype 18 (strain CDC 3083-94 / BS512).